A 333-amino-acid chain; its full sequence is Holliday junction branch migration complex subunit RuvB (333 aa).

A large ATPase domain (RuvB-L) region spans residues 1–182 (MDERLLSGES…FGVLSRLEYY (182 aa)). ATP contacts are provided by residues leucine 21, arginine 22, glycine 63, lysine 66, threonine 67, threonine 68, 129–131 (EDF), arginine 172, tyrosine 182, and arginine 219. Mg(2+) is bound at residue threonine 67. The segment at 183–253 (TVDQLSAIVE…ITQMALELLQ (71 aa)) is small ATPAse domain (RuvB-S). A head domain (RuvB-H) region spans residues 256–333 (KLGLDHIDHK…QHFGMEMPKI (78 aa)). DNA-binding residues include arginine 311 and arginine 316.

Belongs to the RuvB family. In terms of assembly, homohexamer. Forms an RuvA(8)-RuvB(12)-Holliday junction (HJ) complex. HJ DNA is sandwiched between 2 RuvA tetramers; dsDNA enters through RuvA and exits via RuvB. An RuvB hexamer assembles on each DNA strand where it exits the tetramer. Each RuvB hexamer is contacted by two RuvA subunits (via domain III) on 2 adjacent RuvB subunits; this complex drives branch migration. In the full resolvosome a probable DNA-RuvA(4)-RuvB(12)-RuvC(2) complex forms which resolves the HJ.

It is found in the cytoplasm. It carries out the reaction ATP + H2O = ADP + phosphate + H(+). Its function is as follows. The RuvA-RuvB-RuvC complex processes Holliday junction (HJ) DNA during genetic recombination and DNA repair, while the RuvA-RuvB complex plays an important role in the rescue of blocked DNA replication forks via replication fork reversal (RFR). RuvA specifically binds to HJ cruciform DNA, conferring on it an open structure. The RuvB hexamer acts as an ATP-dependent pump, pulling dsDNA into and through the RuvAB complex. RuvB forms 2 homohexamers on either side of HJ DNA bound by 1 or 2 RuvA tetramers; 4 subunits per hexamer contact DNA at a time. Coordinated motions by a converter formed by DNA-disengaged RuvB subunits stimulates ATP hydrolysis and nucleotide exchange. Immobilization of the converter enables RuvB to convert the ATP-contained energy into a lever motion, pulling 2 nucleotides of DNA out of the RuvA tetramer per ATP hydrolyzed, thus driving DNA branch migration. The RuvB motors rotate together with the DNA substrate, which together with the progressing nucleotide cycle form the mechanistic basis for DNA recombination by continuous HJ branch migration. Branch migration allows RuvC to scan DNA until it finds its consensus sequence, where it cleaves and resolves cruciform DNA. This Bacillus cytotoxicus (strain DSM 22905 / CIP 110041 / 391-98 / NVH 391-98) protein is Holliday junction branch migration complex subunit RuvB.